The chain runs to 878 residues: Phosphoenolpyruvate carboxylase (878 aa).

Residues H137 and K545 contribute to the active site.

This sequence belongs to the PEPCase type 1 family. Mg(2+) is required as a cofactor.

The enzyme catalyses oxaloacetate + phosphate = phosphoenolpyruvate + hydrogencarbonate. Forms oxaloacetate, a four-carbon dicarboxylic acid source for the tricarboxylic acid cycle. The protein is Phosphoenolpyruvate carboxylase of Serratia proteamaculans (strain 568).